A 188-amino-acid chain; its full sequence is dCTP deaminase (188 aa).

Residues 111 to 116, 135 to 137, Q156, Y170, and Q180 each bind dCTP; these read KSTYAR and TLE. E137 acts as the Proton donor/acceptor in catalysis.

This sequence belongs to the dCTP deaminase family. In terms of assembly, homotrimer.

The enzyme catalyses dCTP + H2O + H(+) = dUTP + NH4(+). It functions in the pathway pyrimidine metabolism; dUMP biosynthesis; dUMP from dCTP (dUTP route): step 1/2. Its function is as follows. Catalyzes the deamination of dCTP to dUTP. This is dCTP deaminase from Herminiimonas arsenicoxydans.